A 412-amino-acid chain; its full sequence is Serine hydroxymethyltransferase (412 aa).

(6S)-5,6,7,8-tetrahydrofolate contacts are provided by residues Leu-114 and 118-120 (GHL). The residue at position 223 (Lys-223) is an N6-(pyridoxal phosphate)lysine.

The protein belongs to the SHMT family. In terms of assembly, homodimer. Pyridoxal 5'-phosphate is required as a cofactor.

The protein localises to the cytoplasm. The enzyme catalyses (6R)-5,10-methylene-5,6,7,8-tetrahydrofolate + glycine + H2O = (6S)-5,6,7,8-tetrahydrofolate + L-serine. It participates in one-carbon metabolism; tetrahydrofolate interconversion. The protein operates within amino-acid biosynthesis; glycine biosynthesis; glycine from L-serine: step 1/1. In terms of biological role, catalyzes the reversible interconversion of serine and glycine with tetrahydrofolate (THF) serving as the one-carbon carrier. This reaction serves as the major source of one-carbon groups required for the biosynthesis of purines, thymidylate, methionine, and other important biomolecules. Also exhibits THF-independent aldolase activity toward beta-hydroxyamino acids, producing glycine and aldehydes, via a retro-aldol mechanism. This Mesoplasma florum (strain ATCC 33453 / NBRC 100688 / NCTC 11704 / L1) (Acholeplasma florum) protein is Serine hydroxymethyltransferase.